The sequence spans 20 residues: Dermaseptin-N1 (20 aa).

Residue L20 is modified to Leucine amide.

In terms of tissue distribution, expressed by the skin glands.

Its subcellular location is the secreted. Its function is as follows. Antimicrobial peptide with moderate activity against both Gram-positive and Gram-negative bacteria, and important activity against Leishmania species (L.amazonensis and L.infantum). Acts on both Leishmania promastigote and amastigote forms. Shows activity against E.coli (MIC=17.8 uM), S.aureus (MIC=32.3 uM) and the phytopathogenic bacterium Xanthomonas axonopodis (MIC=2 uM). Shows low cytotoxicity against mammalian cells in models of peritoneal macrophages. The protein is Dermaseptin-N1 of Pithecopus nordestinus (Northeastern Brazilian leaf frog).